A 281-amino-acid polypeptide reads, in one-letter code: Succinate dehydrogenase [ubiquinone] iron-sulfur subunit 1, mitochondrial (281 aa).

A mitochondrion-targeting transit peptide spans 1–25 (MAAAALLRRSPAARALLSPALSSRL). A disordered region spans residues 26 to 48 (VASKPHSSSPAPPPPPSKAGANT). The 93-residue stretch at 49–141 (KTFSIYRWDP…ASTISPLPHM (93 aa)) folds into the 2Fe-2S ferredoxin-type domain. The [2Fe-2S] cluster site is built by cysteine 102, cysteine 107, and cysteine 122. The 31-residue stretch at 184-214 (DRAKLDGMYECILCACCSTSCPSYWWNPEEY) folds into the 4Fe-4S ferredoxin-type domain. [4Fe-4S] cluster-binding residues include cysteine 194, cysteine 197, and cysteine 200. Cysteine 204 provides a ligand contact to [3Fe-4S] cluster. A ubiquinone is bound at residue tryptophan 209. Residues cysteine 251 and cysteine 257 each contribute to the [3Fe-4S] cluster site. Cysteine 261 lines the [4Fe-4S] cluster pocket.

The protein belongs to the succinate dehydrogenase/fumarate reductase iron-sulfur protein family. As to quaternary structure, component of complex II composed of eight subunits in plants: four classical SDH subunits SDH1, SDH2, SDH3 and SDH4 (a flavoprotein (FP), an iron-sulfur protein (IP), and a cytochrome b composed of a large and a small subunit.), as well as four subunits unknown in mitochondria from bacteria and heterotrophic eukaryotes. [2Fe-2S] cluster serves as cofactor. [3Fe-4S] cluster is required as a cofactor. Requires [4Fe-4S] cluster as cofactor.

Its subcellular location is the mitochondrion inner membrane. It carries out the reaction a quinone + succinate = fumarate + a quinol. It participates in carbohydrate metabolism; tricarboxylic acid cycle; fumarate from succinate (eukaryal route): step 1/1. In terms of biological role, iron-sulfur protein (IP) subunit of succinate dehydrogenase (SDH) that is involved in complex II of the mitochondrial electron transport chain and is responsible for transferring electrons from succinate to ubiquinone (coenzyme Q). The protein is Succinate dehydrogenase [ubiquinone] iron-sulfur subunit 1, mitochondrial of Oryza sativa subsp. japonica (Rice).